The chain runs to 337 residues: Ketol-acid reductoisomerase (NADP(+)) (337 aa).

In terms of domain architecture, KARI N-terminal Rossmann spans 1–180; the sequence is MQVYYDKDAD…GGTKGGVIET (180 aa). NADP(+) is bound by residues 24-27, Arg-47, and Ser-51; that span reads YGSQ. His-106 is an active-site residue. Gly-132 serves as a coordination point for NADP(+). In terms of domain architecture, KARI C-terminal knotted spans 181-326; it reads TFREETETDL…AQLRAMMPWI (146 aa). Mg(2+) is bound by residues Asp-189, Glu-193, Glu-225, and Glu-229. Ser-250 provides a ligand contact to substrate.

Belongs to the ketol-acid reductoisomerase family. It depends on Mg(2+) as a cofactor.

The enzyme catalyses (2R)-2,3-dihydroxy-3-methylbutanoate + NADP(+) = (2S)-2-acetolactate + NADPH + H(+). It carries out the reaction (2R,3R)-2,3-dihydroxy-3-methylpentanoate + NADP(+) = (S)-2-ethyl-2-hydroxy-3-oxobutanoate + NADPH + H(+). It participates in amino-acid biosynthesis; L-isoleucine biosynthesis; L-isoleucine from 2-oxobutanoate: step 2/4. The protein operates within amino-acid biosynthesis; L-valine biosynthesis; L-valine from pyruvate: step 2/4. Functionally, involved in the biosynthesis of branched-chain amino acids (BCAA). Catalyzes an alkyl-migration followed by a ketol-acid reduction of (S)-2-acetolactate (S2AL) to yield (R)-2,3-dihydroxy-isovalerate. In the isomerase reaction, S2AL is rearranged via a Mg-dependent methyl migration to produce 3-hydroxy-3-methyl-2-ketobutyrate (HMKB). In the reductase reaction, this 2-ketoacid undergoes a metal-dependent reduction by NADPH to yield (R)-2,3-dihydroxy-isovalerate. This is Ketol-acid reductoisomerase (NADP(+)) from Neisseria meningitidis serogroup C (strain 053442).